Reading from the N-terminus, the 264-residue chain is MKIQTNAVNVLQRTSAYLKSGLLKETPAWYNVVASIPPSTKFTREPRFKNPSNGHIIGKLVDVTEQPHANNKGLYKTRPNSSDKRVGVKRLYRPPKLTYVEDRLRSLFYKQHPWELSRPKILVENEIGDENYDWSHMLQIGRPLDGESVIQRTMYLIKTKQYGDMVEAYDHARYEFYALRMQEETEQQVALEEAEMFGSLFGVSAIEHGIQKEQEVLDVWEKKVVEETELMAARTSNPAGSWKDDTTLNTAQEEESTTSENLHF.

Positions 233 to 264 (ARTSNPAGSWKDDTTLNTAQEEESTTSENLHF) are disordered.

Belongs to the mitochondrion-specific ribosomal protein mS23 family. Component of the mitochondrial small ribosomal subunit. Mature mitochondrial ribosomes consist of a small (37S) and a large (54S) subunit. The 37S subunit contains at least 33 different proteins and 1 molecule of RNA (15S). The 54S subunit contains at least 45 different proteins and 1 molecule of RNA (21S).

The protein localises to the mitochondrion. The protein is Small ribosomal subunit protein mS23 (RSM25) of Saccharomyces cerevisiae (strain YJM789) (Baker's yeast).